We begin with the raw amino-acid sequence, 132 residues long: Large ribosomal subunit protein uL22 (132 aa).

Belongs to the universal ribosomal protein uL22 family. As to quaternary structure, part of the 50S ribosomal subunit.

Its function is as follows. This protein binds specifically to 23S rRNA; its binding is stimulated by other ribosomal proteins, e.g. L4, L17, and L20. It is important during the early stages of 50S assembly. It makes multiple contacts with different domains of the 23S rRNA in the assembled 50S subunit and ribosome. The globular domain of the protein is located near the polypeptide exit tunnel on the outside of the subunit, while an extended beta-hairpin is found that lines the wall of the exit tunnel in the center of the 70S ribosome. The sequence is that of Large ribosomal subunit protein uL22 from Pelagibacter ubique (strain HTCC1062).